The following is a 1479-amino-acid chain: ESX secretion system protein EccC (1479 aa).

Topologically, residues 1 to 235 (MSQLWVLYET…SQEGDGDPRG (235 aa)) are cytoplasmic. Residues 236-256 (LWLMVLPPVMMLLVIGAVALI) traverse the membrane as a helical segment. The Extracellular segment spans residues 257 to 259 (QPR). Residues 260–280 (GVFIMISIAMFATTIVTSTAQ) form a helical membrane-spanning segment. At 281-1479 (YMREKKARQM…DQKIQIPKVE (1199 aa)) the chain is on the cytoplasmic side. Positions 291 to 321 (RKEKRRRIYTNYLEQKREELQALSEKQRNVL) form a coiled coil. 2 FtsK domains span residues 652-848 (NDVV…NDSK) and 984-1168 (QSDY…SEKF). 672-679 (GTTGSGKS) provides a ligand contact to ATP. Glu-785 is an active-site residue. Residues 1004–1009 (GYGKST), Asn-1036, Asp-1105, Ile-1197, Asp-1206, 1287–1291 (RKGKT), and Ile-1475 each bind ATP. Positions 1267 to 1444 (VRPVAINMRT…ILVTKKSEQS (178 aa)) constitute a FtsK 3 domain.

As to quaternary structure, whole protein oligomerizes in native gels. Part of the ESX / type VII secretion system (T7SS), which is composed of cytosolic and membrane components. The ESX membrane complex is composed of EccB, EccC and EccD.

The protein localises to the cell membrane. EsxB binding to the third FtsK domain causes multimerization; a subsequent unknown step relieves the allosteric inhibition of linker 2 on FtsK domain 1, activating the ATPase activity. Its function is as follows. Part of the ESX specialized secretion system, which exports proteins from the cell including EsxA (ESAT-6) and EsxB (CFP-10). Might be the translocase subunit. Probably only the first FtsK domain can hydrolyze ATP. This chain is ESX secretion system protein EccC, found in Geobacillus thermodenitrificans (strain NG80-2).